The chain runs to 426 residues: Serine--tRNA ligase (426 aa).

233–235 serves as a coordination point for L-serine; sequence TAE. 264 to 266 contributes to the ATP binding site; that stretch reads RSE. Glu-287 contributes to the L-serine binding site. 351-354 serves as a coordination point for ATP; it reads EISS. Ser-387 is a binding site for L-serine.

Belongs to the class-II aminoacyl-tRNA synthetase family. Type-1 seryl-tRNA synthetase subfamily. In terms of assembly, homodimer. The tRNA molecule binds across the dimer.

It localises to the cytoplasm. The catalysed reaction is tRNA(Ser) + L-serine + ATP = L-seryl-tRNA(Ser) + AMP + diphosphate + H(+). The enzyme catalyses tRNA(Sec) + L-serine + ATP = L-seryl-tRNA(Sec) + AMP + diphosphate + H(+). The protein operates within aminoacyl-tRNA biosynthesis; selenocysteinyl-tRNA(Sec) biosynthesis; L-seryl-tRNA(Sec) from L-serine and tRNA(Sec): step 1/1. Its function is as follows. Catalyzes the attachment of serine to tRNA(Ser). Is also able to aminoacylate tRNA(Sec) with serine, to form the misacylated tRNA L-seryl-tRNA(Sec), which will be further converted into selenocysteinyl-tRNA(Sec). In Pseudomonas putida (strain ATCC 700007 / DSM 6899 / JCM 31910 / BCRC 17059 / LMG 24140 / F1), this protein is Serine--tRNA ligase.